A 109-amino-acid chain; its full sequence is UPF0060 membrane protein YfjF (109 aa).

Transmembrane regions (helical) follow at residues 6 to 26 (ILLFLAAGLAEIGGGYLVWLW), 32 to 52 (PAGYGIAGALILIVYGILPTF), 61 to 81 (VYAAYGGVFIVLAVLWGWLVD), and 87 to 107 (LYDWIGAFICLIGVCVILFAP).

Belongs to the UPF0060 family.

It is found in the cell membrane. This is UPF0060 membrane protein YfjF (yfjF) from Bacillus subtilis (strain 168).